An 833-amino-acid chain; its full sequence is DNA ligase (833 aa).

NAD(+) is bound by residues 35–39, 84–85, and glutamate 115; these read DADYD and SL. The active-site N6-AMP-lysine intermediate is the lysine 117. 4 residues coordinate NAD(+): arginine 138, glutamate 175, lysine 292, and lysine 316. Positions 410, 413, 428, and 434 each coordinate Zn(2+). A BRCT domain is found at 750 to 833; sequence EKTGPLDGQT…AFLGDHGQQP (84 aa).

The protein belongs to the NAD-dependent DNA ligase family. LigA subfamily. It depends on Mg(2+) as a cofactor. The cofactor is Mn(2+).

The catalysed reaction is NAD(+) + (deoxyribonucleotide)n-3'-hydroxyl + 5'-phospho-(deoxyribonucleotide)m = (deoxyribonucleotide)n+m + AMP + beta-nicotinamide D-nucleotide.. Its function is as follows. DNA ligase that catalyzes the formation of phosphodiester linkages between 5'-phosphoryl and 3'-hydroxyl groups in double-stranded DNA using NAD as a coenzyme and as the energy source for the reaction. It is essential for DNA replication and repair of damaged DNA. The protein is DNA ligase of Xanthomonas axonopodis pv. citri (strain 306).